A 902-amino-acid polypeptide reads, in one-letter code: Leucine-rich repeat-containing G-protein coupled receptor 5A (902 aa).

The N-terminal stretch at 1–22 is a signal peptide; sequence MDTSRTSLFLCSVLYSLQLVGS. The Extracellular portion of the chain corresponds to 23–557; the sequence is ARPGKQHRSC…DHLFGSWLTR (535 aa). 2 disulfide bridges follow: cysteine 32-cysteine 38 and cysteine 36-cysteine 49. One can recognise an LRRNT domain in the interval 32-61; sequence CPTPCECEQDGMLVRVDCSDRGLTGLPRNI. LRR repeat units lie at residues 41 to 61, 62 to 85, 86 to 109, 111 to 133, 134 to 157, 159 to 181, 182 to 205, 207 to 229, 230 to 253, 254 to 276, 278 to 300, 301 to 324, 325 to 347, 348 to 372, 374 to 393, 394 to 417, and 418 to 441; these read DGML…PRNI, SIFT…ALHN, LHFL…AFAG, GSLK…ALQN, LRSL…SFNG, FSLR…ALES, LSAL…AFGN, SSLV…CFDG, LHSL…IKTL, KNLK…AFIG, PSLI…AFQH, LPEL…LTGT, TSLE…VCNQ, LPNL…GCQR, QKID…TFQQ, LVGL…SFSS, and LPSL…GLHG. 2 N-linked (GlcNAc...) asparagine glycosylation sites follow: asparagine 60 and asparagine 74. N-linked (GlcNAc...) asparagine glycosylation occurs at asparagine 205. Cysteine 345 and cysteine 370 are disulfide-bonded. Cysteine 476 and cysteine 537 are joined by a disulfide. N-linked (GlcNAc...) asparagine glycosylation is present at asparagine 496. A helical transmembrane segment spans residues 558–578; that stretch reads IGVWLIVLLSFVCNALVIATV. Topologically, residues 579-589 are cytoplasmic; that stretch reads FRPLSYVPSIK. A helical transmembrane segment spans residues 590 to 610; it reads LLIGLIAIINTLMGLSSGVLA. An LRR 18 repeat occupies 598–619; it reads INTLMGLSSGVLATVDALTFGN. The Extracellular portion of the chain corresponds to 611 to 634; sequence TVDALTFGNFAQYGAWWESGVGCQ. Cysteine 633 and cysteine 708 are oxidised to a cystine. Residues 635 to 655 traverse the membrane as a helical segment; the sequence is ITGFLSVFAAETSVFLLTVAA. At 656–678 the chain is on the cytoplasmic side; it reads LERGFSIKCTTKFETKSSFLSVK. A helical transmembrane segment spans residues 679 to 699; that stretch reads LSIVFCFLLSIIIAVSPLMSG. The Extracellular segment spans residues 700-718; that stretch reads STYGTSPFCFPLLFGDPSS. The chain crosses the membrane as a helical span at residues 719–739; sequence MVFMVALVLLNSLCFLVMTVA. Over 740-763 the chain is Cytoplasmic; sequence YTKLYCSLEKGELENVWDCSMVKH. Residues 764 to 784 form a helical membrane-spanning segment; it reads IALLLFTNCILYCPVAFLSFS. Residues 785–798 are Extracellular-facing; that stretch reads SLLNLTFISPEVNK. 2 N-linked (GlcNAc...) asparagine glycosylation sites follow: asparagine 788 and asparagine 797. The helical transmembrane segment at 799–819 threads the bilayer; that stretch reads SILLLIIPLPACLNPLLYILF. Residues 820–902 are Cytoplasmic-facing; that stretch reads NPHFKEDIGS…LSAVAFVPCH (83 aa).

Belongs to the G-protein coupled receptor 1 family. Expressed in the developing epithelial stem cells of the intestine.

It is found in the cell membrane. It localises to the golgi apparatus. Its subcellular location is the trans-Golgi network membrane. Functionally, receptor for R-spondins that potentiates the canonical Wnt signaling pathway and acts as a stem cell marker of the intestinal epithelium and the hair follicle. Upon binding to R-spondins (RSPO1, RSPO2, RSPO3 or RSPO4), associates with phosphorylated LRP6 and frizzled receptors that are activated by extracellular Wnt receptors, triggering the canonical Wnt signaling pathway to increase expression of target genes. In contrast to classical G-protein coupled receptors, does not activate heterotrimeric G-proteins to transduce the signal. Involved in the development and/or maintenance of the adult intestinal stem cells during postembryonic development. The chain is Leucine-rich repeat-containing G-protein coupled receptor 5A (lgr5-a) from Xenopus laevis (African clawed frog).